We begin with the raw amino-acid sequence, 381 residues long: MFVSIPNIRKAVVSLSVVPLLAACAFAPGMRFDPQRPLDPADNASVPKITPITPDLVRAGQTQAQVQASHENADVGPLLAKATPYRIGTGDILSIVVWDHPELVFPTQTYSIGSTYDLASFGGAPSVSGYVVSTGGDIQFPYAGVIKVAGKTQNEVRDEISRGIARVVKDPQVTVRVLAYRSQRVYVDGEVKTPGQQSIDDVPMTLVEALNRAGGINTTTGDNSRIRLTRGGKQWTLSMPALMQQGIDPANILLRGGDIVRVEQREDSKVFVTGEVVRPSTVLPRNGRLTLSEALGEAGGVSPVSSDPRNVYVIRRAAEGEPQVYHLDAKSPVALALAEGFELKPKDVVYVDAGSLVRWSRVINLLVPTATPLIGAAAVAK.

Residues 1–23 form the signal peptide; the sequence is MFVSIPNIRKAVVSLSVVPLLAA. Cys24 is lipidated: N-palmitoyl cysteine. The S-diacylglycerol cysteine moiety is linked to residue Cys24.

It belongs to the BexD/CtrA/VexA family.

It is found in the cell outer membrane. Probably involved in polymerization and/or export of exopolysaccharide EPS I which functions as a virulence factor. This chain is EPS I polysaccharide export outer membrane protein EpsA (epsA), found in Ralstonia nicotianae (strain ATCC BAA-1114 / GMI1000) (Ralstonia solanacearum).